The primary structure comprises 394 residues: Elongation factor Tu 1 (394 aa).

Residues 10 to 204 form the tr-type G domain; it reads KPHVNVGTIG…FLDSYIPEPE (195 aa). The segment at 19 to 26 is G1; sequence GHVDHGKT. 19 to 26 is a binding site for GTP; it reads GHVDHGKT. Position 26 (Thr26) interacts with Mg(2+). The G2 stretch occupies residues 60–64; it reads GITIN. Residues 81–84 are G3; that stretch reads DCPG. GTP is bound by residues 81-85 and 136-139; these read DCPGH and NKCD. The interval 136–139 is G4; sequence NKCD. The segment at 174–176 is G5; it reads SAL.

It belongs to the TRAFAC class translation factor GTPase superfamily. Classic translation factor GTPase family. EF-Tu/EF-1A subfamily. In terms of assembly, monomer.

The protein localises to the cytoplasm. It carries out the reaction GTP + H2O = GDP + phosphate + H(+). GTP hydrolase that promotes the GTP-dependent binding of aminoacyl-tRNA to the A-site of ribosomes during protein biosynthesis. The chain is Elongation factor Tu 1 from Shigella flexneri serotype 5b (strain 8401).